Reading from the N-terminus, the 200-residue chain is Cysteine dioxygenase type 1 (200 aa).

3 residues coordinate Fe cation: His-86, His-88, and His-140. A cross-link (3'-(S-cysteinyl)-tyrosine (Cys-Tyr)) is located at residues 93-157; the sequence is CFLKLLQGNL…TEPAVSLHLY (65 aa).

The protein belongs to the cysteine dioxygenase family. Monomer. It depends on Fe(2+) as a cofactor. The cofactor is Ni(2+). Requires Zn(2+) as cofactor. Post-translationally, the thioether cross-link between Cys-93 and Tyr-157 plays a structural role through stabilizing the Fe(2+) ion, and prevents the production of highly damaging free hydroxyl radicals by holding the oxygen radical via hydroxyl hydrogen. Highest expression in liver. Also expressed in kidney, lung, brain and small intestine.

It catalyses the reaction L-cysteine + O2 = 3-sulfino-L-alanine + H(+). It participates in organosulfur biosynthesis; taurine biosynthesis; hypotaurine from L-cysteine: step 1/2. Its function is as follows. Catalyzes the oxidation of cysteine to cysteine sulfinic acid with addition of molecular dioxygen. This Mus musculus (Mouse) protein is Cysteine dioxygenase type 1 (Cdo1).